Here is a 320-residue protein sequence, read N- to C-terminus: L-lactate dehydrogenase (320 aa).

NAD(+) is bound by residues Val18, Asp39, Arg44, Tyr69, and 83 to 84 (GA). Substrate-binding residues include Gln86 and Arg92. NAD(+) is bound by residues Thr105, 122-124 (AAN), and Ser147. A substrate-binding site is contributed by 124-127 (NPVD). 152–155 (DSAR) serves as a coordination point for substrate. The active-site Proton acceptor is His179. Position 223 is a phosphotyrosine (Tyr223). Residue Thr232 coordinates substrate.

Belongs to the LDH/MDH superfamily. LDH family. Homotetramer.

It localises to the cytoplasm. The enzyme catalyses (S)-lactate + NAD(+) = pyruvate + NADH + H(+). The protein operates within fermentation; pyruvate fermentation to lactate; (S)-lactate from pyruvate: step 1/1. Functionally, catalyzes the conversion of lactate to pyruvate. The protein is L-lactate dehydrogenase of Pediococcus pentosaceus (strain ATCC 25745 / CCUG 21536 / LMG 10740 / 183-1w).